A 431-amino-acid polypeptide reads, in one-letter code: Mevalonate kinase (431 aa).

ATP contacts are provided by residues K13, S139, and G144 to S150. Positions 150 and 198 each coordinate Mg(2+). D209 functions as the Proton acceptor in the catalytic mechanism.

The protein belongs to the GHMP kinase family. Mevalonate kinase subfamily. In terms of assembly, homodimer.

Its subcellular location is the cytoplasm. It is found in the cytosol. It carries out the reaction (R)-mevalonate + ATP = (R)-5-phosphomevalonate + ADP + H(+). Its pathway is isoprenoid biosynthesis; isopentenyl diphosphate biosynthesis via mevalonate pathway; isopentenyl diphosphate from (R)-mevalonate: step 1/3. Functionally, mevalonate kinase; part of the second module of ergosterol biosynthesis pathway that includes the middle steps of the pathway. ERG12 converts mevalonate into 5-phosphomevalonate. The second module is carried out in the vacuole and involves the formation of farnesyl diphosphate, which is also an important intermediate in the biosynthesis of ubiquinone, dolichol, heme and prenylated proteins. Activity by the mevalonate kinase ERG12 first converts mevalonate into 5-phosphomevalonate. 5-phosphomevalonate is then further converted to 5-diphosphomevalonate by the phosphomevalonate kinase ERG8. The diphosphomevalonate decarboxylase MVD then produces isopentenyl diphosphate. The isopentenyl-diphosphate delta-isomerase IDI1 then catalyzes the 1,3-allylic rearrangement of the homoallylic substrate isopentenyl (IPP) to its highly electrophilic allylic isomer, dimethylallyl diphosphate (DMAPP). Finally the farnesyl diphosphate synthase ERG20 catalyzes the sequential condensation of isopentenyl pyrophosphate with dimethylallyl pyrophosphate, and then with the resultant geranylpyrophosphate to the ultimate product farnesyl pyrophosphate. The chain is Mevalonate kinase from Candida albicans (strain SC5314 / ATCC MYA-2876) (Yeast).